The following is a 288-amino-acid chain: Large ribosomal subunit protein uL2 (288 aa).

The tract at residues G232 to Y265 is disordered. The segment covering D239 to E255 has biased composition (basic and acidic residues).

This sequence belongs to the universal ribosomal protein uL2 family. Part of the 50S ribosomal subunit. Forms a bridge to the 30S subunit in the 70S ribosome.

One of the primary rRNA binding proteins. Required for association of the 30S and 50S subunits to form the 70S ribosome, for tRNA binding and peptide bond formation. It has been suggested to have peptidyltransferase activity; this is somewhat controversial. Makes several contacts with the 16S rRNA in the 70S ribosome. This chain is Large ribosomal subunit protein uL2, found in Hydrogenobaculum sp. (strain Y04AAS1).